We begin with the raw amino-acid sequence, 75 residues long: RNA-binding protein KhpA (75 aa).

One can recognise a KH domain in the interval 29–75 (SIILELKVSPEDMGKVIGKQGRIAKAIRTVVKAAAIKENKKVVVEII).

This sequence belongs to the KhpA RNA-binding protein family. Forms a complex with KhpB.

It is found in the cytoplasm. In terms of biological role, a probable RNA chaperone. Forms a complex with KhpB which binds to cellular RNA and controls its expression. Plays a role in peptidoglycan (PG) homeostasis and cell length regulation. This chain is RNA-binding protein KhpA, found in Clostridium perfringens (strain 13 / Type A).